The chain runs to 501 residues: tRNA (guanine(37)-N(1))-methyltransferase (501 aa).

S-adenosyl-L-methionine-binding positions include H282, 320-321 (DL), 348-349 (DG), and N380. Positions 474–501 (LQNDQEPPLKRQKTGDPFSGEPQIASDS) are disordered.

It belongs to the class I-like SAM-binding methyltransferase superfamily. TRM5/TYW2 family. In terms of assembly, monomer.

It localises to the mitochondrion matrix. Its subcellular location is the nucleus. The protein resides in the cytoplasm. It carries out the reaction guanosine(37) in tRNA + S-adenosyl-L-methionine = N(1)-methylguanosine(37) in tRNA + S-adenosyl-L-homocysteine + H(+). Involved in mitochondrial tRNA methylation. Specifically methylates the N1 position of guanosine-37 in various tRNAs. Methylation is not dependent on the nature of the nucleoside 5' of the target nucleoside. This is the first step in the biosynthesis of wybutosine (yW), a modified base adjacent to the anticodon of tRNAs and required for accurate decoding. This chain is tRNA (guanine(37)-N(1))-methyltransferase (Trmt5), found in Mus musculus (Mouse).